The primary structure comprises 571 residues: Adenine deaminase (571 aa).

Belongs to the metallo-dependent hydrolases superfamily. Adenine deaminase family. The cofactor is Mn(2+).

The catalysed reaction is adenine + H2O + H(+) = hypoxanthine + NH4(+). This Dehalococcoides mccartyi (strain ATCC BAA-2266 / KCTC 15142 / 195) (Dehalococcoides ethenogenes (strain 195)) protein is Adenine deaminase.